We begin with the raw amino-acid sequence, 79 residues long: CDC42 small effector protein 1 (79 aa).

2 S-palmitoyl cysteine lipidation sites follow: Cys-10 and Cys-11. Residues 30–43 (IGEPMNFVHLTHIG) enclose the CRIB domain. The disordered stretch occupies residues 48–79 (GAGDGLAMTGAVQEQMRSKGNRDRPWSNSRGL). The segment covering 63-72 (MRSKGNRDRP) has biased composition (basic and acidic residues).

It belongs to the CDC42SE/SPEC family. In terms of assembly, interacts with CDC42 (in GTP-bound form). Interacts weakly with RAC1 and not at all with RHOA.

The protein resides in the cytoplasm. The protein localises to the cytoskeleton. It localises to the cell membrane. In terms of biological role, probably involved in the organization of the actin cytoskeleton by acting downstream of CDC42, inducing actin filament assembly. Alters CDC42-induced cell shape changes. In activated T-cells, may play a role in CDC42-mediated F-actin accumulation at the immunological synapse. May play a role in early contractile events in phagocytosis in macrophages. This is CDC42 small effector protein 1 (CDC42SE1) from Pongo abelii (Sumatran orangutan).